We begin with the raw amino-acid sequence, 662 residues long: Bifunctional polymyxin resistance protein ArnA (662 aa).

Residues 1–307 (MTSKAVVFAY…ELGLVEGARL (307 aa)) are formyltransferase ArnAFT. Histidine 106 serves as the catalytic Proton donor; for formyltransferase activity. (6R)-10-formyltetrahydrofolate is bound by residues arginine 116 and 138–142 (IERAD). The segment at 316–662 (RRTRVLILGV…EALREREAQA (347 aa)) is dehydrogenase ArnADH. Residues aspartate 349 and 370-371 (DI) each bind NAD(+). UDP-alpha-D-glucuronate-binding positions include alanine 395, tyrosine 400, and 434–435 (TS). Glutamate 436 serves as the catalytic Proton acceptor; for decarboxylase activity. UDP-alpha-D-glucuronate contacts are provided by residues arginine 462, asparagine 493, 527–536 (RLVDGGAQKR), and tyrosine 614. Catalysis depends on arginine 620, which acts as the Proton donor; for decarboxylase activity.

It in the N-terminal section; belongs to the Fmt family. UDP-L-Ara4N formyltransferase subfamily. This sequence in the C-terminal section; belongs to the NAD(P)-dependent epimerase/dehydratase family. UDP-glucuronic acid decarboxylase subfamily. In terms of assembly, homohexamer, formed by a dimer of trimers.

The enzyme catalyses UDP-alpha-D-glucuronate + NAD(+) = UDP-beta-L-threo-pentopyranos-4-ulose + CO2 + NADH. The catalysed reaction is UDP-4-amino-4-deoxy-beta-L-arabinose + (6R)-10-formyltetrahydrofolate = UDP-4-deoxy-4-formamido-beta-L-arabinose + (6S)-5,6,7,8-tetrahydrofolate + H(+). It participates in nucleotide-sugar biosynthesis; UDP-4-deoxy-4-formamido-beta-L-arabinose biosynthesis; UDP-4-deoxy-4-formamido-beta-L-arabinose from UDP-alpha-D-glucuronate: step 1/3. It functions in the pathway nucleotide-sugar biosynthesis; UDP-4-deoxy-4-formamido-beta-L-arabinose biosynthesis; UDP-4-deoxy-4-formamido-beta-L-arabinose from UDP-alpha-D-glucuronate: step 3/3. The protein operates within bacterial outer membrane biogenesis; lipopolysaccharide biosynthesis. Bifunctional enzyme that catalyzes the oxidative decarboxylation of UDP-glucuronic acid (UDP-GlcUA) to UDP-4-keto-arabinose (UDP-Ara4O) and the addition of a formyl group to UDP-4-amino-4-deoxy-L-arabinose (UDP-L-Ara4N) to form UDP-L-4-formamido-arabinose (UDP-L-Ara4FN). The modified arabinose is attached to lipid A and is required for resistance to polymyxin and cationic antimicrobial peptides. The sequence is that of Bifunctional polymyxin resistance protein ArnA from Pseudomonas aeruginosa (strain LESB58).